Here is a 213-residue protein sequence, read N- to C-terminus: 3-isopropylmalate dehydratase small subunit (213 aa).

It belongs to the LeuD family. LeuD type 1 subfamily. As to quaternary structure, heterodimer of LeuC and LeuD.

It carries out the reaction (2R,3S)-3-isopropylmalate = (2S)-2-isopropylmalate. Its pathway is amino-acid biosynthesis; L-leucine biosynthesis; L-leucine from 3-methyl-2-oxobutanoate: step 2/4. Functionally, catalyzes the isomerization between 2-isopropylmalate and 3-isopropylmalate, via the formation of 2-isopropylmaleate. This Aromatoleum aromaticum (strain DSM 19018 / LMG 30748 / EbN1) (Azoarcus sp. (strain EbN1)) protein is 3-isopropylmalate dehydratase small subunit.